The chain runs to 337 residues: DNA-directed RNA polymerase subunit alpha (337 aa).

An alpha N-terminal domain (alpha-NTD) region spans residues 1 to 233; it reads MVREKVKVST…NLFIPFLHVE (233 aa). The tract at residues 267–337 is alpha C-terminal domain (alpha-CTD); sequence LAFQYIFIDQ…IEKAFQKKID (71 aa).

This sequence belongs to the RNA polymerase alpha chain family. In plastids the minimal PEP RNA polymerase catalytic core is composed of four subunits: alpha, beta, beta', and beta''. When a (nuclear-encoded) sigma factor is associated with the core the holoenzyme is formed, which can initiate transcription.

It localises to the plastid. The protein localises to the chloroplast. The enzyme catalyses RNA(n) + a ribonucleoside 5'-triphosphate = RNA(n+1) + diphosphate. Functionally, DNA-dependent RNA polymerase catalyzes the transcription of DNA into RNA using the four ribonucleoside triphosphates as substrates. The chain is DNA-directed RNA polymerase subunit alpha from Arabis hirsuta (Hairy rock-cress).